We begin with the raw amino-acid sequence, 295 residues long: GTPase Era (295 aa).

In terms of domain architecture, Era-type G spans 4 to 171 (KSGFVTIIGR…INLIVQYLPE (168 aa)). The tract at residues 12-19 (GRPNVGKS) is G1. 12–19 (GRPNVGKS) is a GTP binding site. The G2 stretch occupies residues 38–42 (QTTRN). The tract at residues 59-62 (DTPG) is G3. Residues 59–63 (DTPGI) and 121–124 (NKID) each bind GTP. The interval 121 to 124 (NKID) is G4. The segment at 150–152 (ISA) is G5. The region spanning 194 to 280 (IREKILHYTD…YLELWVKVKE (87 aa)) is the KH type-2 domain.

The protein belongs to the TRAFAC class TrmE-Era-EngA-EngB-Septin-like GTPase superfamily. Era GTPase family. As to quaternary structure, monomer.

The protein resides in the cytoplasm. The protein localises to the cell membrane. An essential GTPase that binds both GDP and GTP, with rapid nucleotide exchange. Plays a role in 16S rRNA processing and 30S ribosomal subunit biogenesis and possibly also in cell cycle regulation and energy metabolism. The sequence is that of GTPase Era from Alkaliphilus oremlandii (strain OhILAs) (Clostridium oremlandii (strain OhILAs)).